The following is a 153-amino-acid chain: Facilitator of iron transport 2 (153 aa).

The signal sequence occupies residues 1–18 (MKFSTIFGATTVMTAVSA). The interval 73–98 (TEGPDTTSEKSTTKTLTLTNGSGSST) is disordered. Positions 85–98 (TKTLTLTNGSGSST) are enriched in low complexity. An N-linked (GlcNAc...) asparagine glycan is attached at Asn-92. Gly-130 is lipidated: GPI-anchor amidated glycine. The propeptide at 131-153 (AAPAAFQGASVGALALGLISYLL) is removed in mature form.

In terms of processing, the GPI-anchor is attached to the protein in the endoplasmic reticulum and serves to target the protein to the cell surface. There, the glucosamine-inositol phospholipid moiety is cleaved off and the GPI-modified mannoprotein is covalently attached via its lipidless GPI glycan remnant to the 1,6-beta-glucan of the outer cell wall layer.

Its subcellular location is the secreted. The protein localises to the cell wall. It localises to the membrane. Involved in the uptake of non-siderophore and siderophore sources of iron. Has a role in the retention of iron in the cell wall and periplasmic space. In Saccharomyces cerevisiae (strain ATCC 204508 / S288c) (Baker's yeast), this protein is Facilitator of iron transport 2 (FIT2).